Here is an 86-residue protein sequence, read N- to C-terminus: uncharacterized protein (86 aa).

This is an uncharacterized protein from Schizosaccharomyces pombe (strain 972 / ATCC 24843) (Fission yeast).